A 1141-amino-acid chain; its full sequence is Isoleucine--tRNA ligase, cytoplasmic (1141 aa).

The 'HIGH' region motif lies at 50–60 (PFATGLPHYGH). The 'KMSKS' region motif lies at 601-605 (KMSKS). Lys-604 lines the ATP pocket.

The protein belongs to the class-I aminoacyl-tRNA synthetase family.

Its subcellular location is the cytoplasm. It catalyses the reaction tRNA(Ile) + L-isoleucine + ATP = L-isoleucyl-tRNA(Ile) + AMP + diphosphate. This chain is Isoleucine--tRNA ligase, cytoplasmic, found in Caenorhabditis elegans.